We begin with the raw amino-acid sequence, 419 residues long: Zinc finger protein Pegasus (419 aa).

3 consecutive C2H2-type zinc fingers follow at residues 79–101, 107–129, and 135–158; these read LKCRYCNYATRGTARLIEHIRIH, HRCHLCPFASAYERHLEAHMRSH, and YKCELCSFRCSDRSNLSHHRRRRH. Disordered regions lie at residues 203-255 and 310-360; these read LQKP…DQDM and SVNT…TPVQ. Residues 208 to 228 are compositionally biased toward basic and acidic residues; the sequence is SEQHHLGDFTHDLPPHAHLHQ. Composition is skewed to polar residues over residues 310–320 and 341–360; these read SVNTAQASSPI and ERTSTPSGTNSQPGTPTPVQ. C2H2-type zinc fingers lie at residues 366-388 and 394-418; these read HHCPHCHIYFPDNILYTIHMGCH and FQCNICGHRCRNSYDFACHFARGQH.

It belongs to the Ikaros C2H2-type zinc-finger protein family. As to quaternary structure, probably self-associates.

It is found in the nucleus. Transcriptional repressor that binds the core 5'GNNTGTNG-3' DNA consensus sequence. This chain is Zinc finger protein Pegasus (ikzf5), found in Danio rerio (Zebrafish).